The primary structure comprises 69 residues: Conotoxin Gla-TxXI (69 aa).

Positions 1 to 25 (MVRVTSVGCFLLVIVSLNLVVLTNA) are cleaved as a signal peptide. 4 disulfides stabilise this stretch: Cys26/Cys40, Cys33/Cys45, Cys39/Cys49, and Cys44/Cys53. Glu29 carries the post-translational modification 4-carboxyglutamate. Position 56 is a proline amide (Pro56). The propeptide occupies 60 to 69 (AKLLEFFRQR).

Contains 4 disulfide bonds. In terms of tissue distribution, expressed by the venom duct.

The protein localises to the secreted. The polypeptide is Conotoxin Gla-TxXI (Conus textile (Cloth-of-gold cone)).